A 204-amino-acid chain; its full sequence is Urease accessory protein UreG (204 aa).

GTP is bound at residue 11-18 (GPVGAGKT).

The protein belongs to the SIMIBI class G3E GTPase family. UreG subfamily. Homodimer. UreD, UreF and UreG form a complex that acts as a GTP-hydrolysis-dependent molecular chaperone, activating the urease apoprotein by helping to assemble the nickel containing metallocenter of UreC. The UreE protein probably delivers the nickel.

Its subcellular location is the cytoplasm. Functionally, facilitates the functional incorporation of the urease nickel metallocenter. This process requires GTP hydrolysis, probably effectuated by UreG. In Staphylococcus epidermidis (strain ATCC 12228 / FDA PCI 1200), this protein is Urease accessory protein UreG.